The chain runs to 439 residues: Tol-Pal system protein TolB (439 aa).

Residues 1-22 (MKKPLRWLAALTALLLPLSALA) form the signal peptide.

The protein belongs to the TolB family. As to quaternary structure, the Tol-Pal system is composed of five core proteins: the inner membrane proteins TolA, TolQ and TolR, the periplasmic protein TolB and the outer membrane protein Pal. They form a network linking the inner and outer membranes and the peptidoglycan layer.

The protein resides in the periplasm. Its function is as follows. Part of the Tol-Pal system, which plays a role in outer membrane invagination during cell division and is important for maintaining outer membrane integrity. This is Tol-Pal system protein TolB from Xanthomonas axonopodis pv. citri (strain 306).